We begin with the raw amino-acid sequence, 245 residues long: Homeobox protein Hox-A4a (245 aa).

The segment at 34–99 (DYYERPKDPG…HGPRLTTESC (66 aa)) is disordered. Basic and acidic residues predominate over residues 35–51 (YYERPKDPGFPHHEEAS). 2 stretches are compositionally biased toward polar residues: residues 53-73 (PRSN…NDLN) and 82-99 (QPQS…TESC). Positions 126 to 131 (VYPWMK) match the Antp-type hexapeptide motif. A DNA-binding region (homeobox) is located at residues 147-206 (PKRSRTAYTRQQALELEKEFHFNRYLTRRRRVEIAHTMCLSERQVKIWFQNRRMKWKKDH). The interval 205–245 (DHKLPNTKIRSSSSAPSNHHVKTDATQQQQTLLPTPCSSNL) is disordered. Residues 212–221 (KIRSSSSAPS) show a composition bias toward polar residues. Residues 230 to 245 (TQQQQTLLPTPCSSNL) show a composition bias toward low complexity.

This sequence belongs to the Antp homeobox family. Deformed subfamily.

It is found in the nucleus. In terms of biological role, sequence-specific transcription factor which is part of a developmental regulatory system that provides cells with specific positional identities on the anterior-posterior axis. The chain is Homeobox protein Hox-A4a (hoxa4a) from Danio rerio (Zebrafish).